Consider the following 360-residue polypeptide: MTATLERRQTASLWERFCSWITSTENRLYIGWFGVLMIPTLLTATSVFIIGFIAAPPVDIDGIREPGFRSLLYGNNIITGAIVPTSNAIGIHFYPIWEAASLDEWLYNGGPYELIVLHFFIGICAYMGREWELSYRLGMRPWIAVAFSAPVAAATAVFIIYPIGQGSFSDGMPLGISGTFNFMLVFQAEHNILMHPFHMMGVAGVFGGSLFSAMHGSLVTSSLIRERTENESANNGYKFGQEYETYNIVAAHGYFGRLIFQYASFNNSRSLHFFLALWPVVCICVTALGVSTMAFNLNGFNFNQSVVDSQGRVINTWADILNRANLGIEVMHERNAHNFPLDLASEVSLPVALNKVEING.

The next 3 membrane-spanning stretches (helical) occupy residues 29–46, 118–133, and 142–156; these read YIGW…TATS, HFFI…EWEL, and WIAV…AATA. Residue histidine 118 participates in chlorophyll a binding. Residue tyrosine 126 coordinates pheophytin a. [CaMn4O5] cluster is bound by residues aspartate 170 and glutamate 189. A helical membrane pass occupies residues 197–218; sequence FHMMGVAGVFGGSLFSAMHGSL. Histidine 198 is a chlorophyll a binding site. A quinone-binding positions include histidine 215 and 264–265; that span reads SF. Histidine 215 contributes to the Fe cation binding site. Histidine 272 contacts Fe cation. The helical transmembrane segment at 274-288 threads the bilayer; the sequence is FLALWPVVCICVTAL. [CaMn4O5] cluster-binding residues include histidine 332, glutamate 333, aspartate 342, and alanine 344. Positions 345–360 are excised as a propeptide; it reads SEVSLPVALNKVEING.

This sequence belongs to the reaction center PufL/M/PsbA/D family. In terms of assembly, PSII is composed of 1 copy each of membrane proteins PsbA, PsbB, PsbC, PsbD, PsbE, PsbF, PsbH, PsbI, PsbJ, PsbK, PsbL, PsbM, PsbT, PsbY, PsbZ, Psb30/Ycf12, at least 3 peripheral proteins of the oxygen-evolving complex and a large number of cofactors. It forms dimeric complexes. It depends on The D1/D2 heterodimer binds P680, chlorophylls that are the primary electron donor of PSII, and subsequent electron acceptors. It shares a non-heme iron and each subunit binds pheophytin, quinone, additional chlorophylls, carotenoids and lipids. D1 provides most of the ligands for the Mn4-Ca-O5 cluster of the oxygen-evolving complex (OEC). There is also a Cl(-1) ion associated with D1 and D2, which is required for oxygen evolution. The PSII complex binds additional chlorophylls, carotenoids and specific lipids. as a cofactor. Post-translationally, tyr-161 forms a radical intermediate that is referred to as redox-active TyrZ, YZ or Y-Z. C-terminally processed by CTPA; processing is essential to allow assembly of the oxygen-evolving complex and thus photosynthetic growth.

The protein localises to the plastid. It is found in the chloroplast thylakoid membrane. The catalysed reaction is 2 a plastoquinone + 4 hnu + 2 H2O = 2 a plastoquinol + O2. Functionally, photosystem II (PSII) is a light-driven water:plastoquinone oxidoreductase that uses light energy to abstract electrons from H(2)O, generating O(2) and a proton gradient subsequently used for ATP formation. It consists of a core antenna complex that captures photons, and an electron transfer chain that converts photonic excitation into a charge separation. The D1/D2 (PsbA/PsbD) reaction center heterodimer binds P680, the primary electron donor of PSII as well as several subsequent electron acceptors. The chain is Photosystem II protein D1 from Galdieria sulphuraria (Red alga).